The following is a 229-amino-acid chain: Triosephosphate isomerase (229 aa).

6–8 provides a ligand contact to substrate; it reads NLK. Residue histidine 85 is the Electrophile of the active site. Catalysis depends on glutamate 152, which acts as the Proton acceptor. The substrate site is built by glycine 158 and serine 188.

The protein belongs to the triosephosphate isomerase family. As to quaternary structure, homodimer.

It is found in the cytoplasm. It carries out the reaction D-glyceraldehyde 3-phosphate = dihydroxyacetone phosphate. It participates in carbohydrate biosynthesis; gluconeogenesis. It functions in the pathway carbohydrate degradation; glycolysis; D-glyceraldehyde 3-phosphate from glycerone phosphate: step 1/1. In terms of biological role, involved in the gluconeogenesis. Catalyzes stereospecifically the conversion of dihydroxyacetone phosphate (DHAP) to D-glyceraldehyde-3-phosphate (G3P). This Campylobacter curvus (strain 525.92) protein is Triosephosphate isomerase.